A 327-amino-acid polypeptide reads, in one-letter code: MTVDSNTSSGRGNDPEQIDLIELLLQLWRGKMTIIVAVIIAILLAVGYLMIAKEKWTSTAIITQPDAAQVATYTNALNVLYGGNAPKISEVQANFISRFSSAFSALSEVLDNQKEREKLTIEQSVKGQALPLSVSYVSTTAEGAQRRLAEYIQQVDEEVAKELEVDLKDNITLQTKTLQESLETQEVVAQEQKDLRIKQIEEALRYADEAKITQPQIQQTQDVTQDTMFLLGSDALKSMIQNEATRPLVFSPAYYQTKQTLLDIKNLKVTADTVHVYRYVMKPTLPVRRDSPKTAITLVLAVLLGGMIGAGIVLGRNALRSYKPKAL.

Topologically, residues 1–31 (MTVDSNTSSGRGNDPEQIDLIELLLQLWRGK) are cytoplasmic. The chain crosses the membrane as a helical span at residues 32-52 (MTIIVAVIIAILLAVGYLMIA). The Periplasmic segment spans residues 53-294 (KEKWTSTAII…LPVRRDSPKT (242 aa)). A helical transmembrane segment spans residues 295-315 (AITLVLAVLLGGMIGAGIVLG). At 316 to 327 (RNALRSYKPKAL) the chain is on the cytoplasmic side.

The protein belongs to the WzzB/Cld/Rol family.

It is found in the cell inner membrane. It functions in the pathway bacterial outer membrane biogenesis; lipopolysaccharide biosynthesis. Confers a modal distribution of chain length on the O-antigen component of lipopolysaccharide (LPS). Gives rise to a reduced number of short chain molecules and increases in numbers of longer molecules, with a modal value of 20. The sequence is that of Chain length determinant protein (wzzB) from Salmonella typhimurium (strain LT2 / SGSC1412 / ATCC 700720).